Consider the following 311-residue polypeptide: Cytosolic Fe-S cluster assembly factor Nubp1 homolog (311 aa).

4 residues coordinate [4Fe-4S] cluster: C9, C23, C26, and C32. An ATP-binding site is contributed by 63 to 70 (GKGGVGKS). Residues C240 and C243 each coordinate [4Fe-4S] cluster.

Belongs to the Mrp/NBP35 ATP-binding proteins family. NUBP1/NBP35 subfamily. As to quaternary structure, heterotetramer of 2 Nubp1 and 2 Nubp2 chains. [4Fe-4S] cluster is required as a cofactor.

The protein localises to the cytoplasm. Component of the cytosolic iron-sulfur (Fe/S) protein assembly (CIA) machinery. Required for maturation of extramitochondrial Fe-S proteins. The Nubp1-Nubp2 heterotetramer forms a Fe-S scaffold complex, mediating the de novo assembly of an Fe-S cluster and its transfer to target apoproteins. The sequence is that of Cytosolic Fe-S cluster assembly factor Nubp1 homolog from Drosophila erecta (Fruit fly).